Consider the following 253-residue polypeptide: A-type ATP synthase subunit B (253 aa).

It belongs to the ATPase alpha/beta chains family. As to quaternary structure, has multiple subunits with at least A(3), B(3), C, D, E, F, H, I and proteolipid K(x).

It localises to the cell membrane. Its function is as follows. Component of the A-type ATP synthase that produces ATP from ADP in the presence of a proton gradient across the membrane. The B chain is a regulatory subunit. The chain is A-type ATP synthase subunit B from Methanothermococcus thermolithotrophicus (Methanococcus thermolithotrophicus).